Here is a 147-residue protein sequence, read N- to C-terminus: Ubiquitin-conjugating enzyme E2-17 kDa (147 aa).

The UBC core domain maps to Met1–Met147. The active-site Glycyl thioester intermediate is the Cys85.

This sequence belongs to the ubiquitin-conjugating enzyme family.

The enzyme catalyses S-ubiquitinyl-[E1 ubiquitin-activating enzyme]-L-cysteine + [E2 ubiquitin-conjugating enzyme]-L-cysteine = [E1 ubiquitin-activating enzyme]-L-cysteine + S-ubiquitinyl-[E2 ubiquitin-conjugating enzyme]-L-cysteine.. It participates in protein modification; protein ubiquitination. Functionally, catalyzes the covalent attachment of ubiquitin to other proteins. Mediates the selective degradation of short-lived and abnormal proteins. Required for proper telomere behavior during cell divisions and possibly for ubiquitination of proteins involved in postmeiotic stages of spermatogenesis. Deletion mutations are lethal in homozygotes. The protein is Ubiquitin-conjugating enzyme E2-17 kDa (eff) of Drosophila melanogaster (Fruit fly).